The following is a 147-amino-acid chain: UPF0208 membrane protein CGSHiEE_06015 (147 aa).

A run of 2 helical transmembrane segments spans residues 38–58 (FAQK…QIYA) and 67–87 (IAIL…YWLG).

Belongs to the UPF0208 family.

Its subcellular location is the cell inner membrane. This chain is UPF0208 membrane protein CGSHiEE_06015, found in Haemophilus influenzae (strain PittEE).